Here is a 222-residue protein sequence, read N- to C-terminus: UPF0585 protein CG18661 (222 aa).

It belongs to the UPF0585 family.

The polypeptide is UPF0585 protein CG18661 (Drosophila melanogaster (Fruit fly)).